The sequence spans 110 residues: Inner membrane protein H108R (110 aa).

A helical transmembrane segment spans residues 10-32 (LIVIITILITTRELSTTMLIVSL).

This sequence belongs to the asfivirus H108R family.

Its subcellular location is the virion membrane. This chain is Inner membrane protein H108R, found in African swine fever virus (isolate Pig/Kenya/KEN-50/1950) (ASFV).